The chain runs to 256 residues: Acetoacetate decarboxylase 3 (256 aa).

Lys110 serves as the catalytic Schiff-base intermediate with acetoacetate.

Belongs to the ADC family.

The enzyme catalyses acetoacetate + H(+) = acetone + CO2. Its function is as follows. Catalyzes the conversion of acetoacetate to acetone and carbon dioxide. The sequence is that of Acetoacetate decarboxylase 3 from Mesorhizobium japonicum (strain LMG 29417 / CECT 9101 / MAFF 303099) (Mesorhizobium loti (strain MAFF 303099)).